The chain runs to 153 residues: Nucleoside diphosphate kinase (153 aa).

ATP is bound by residues Lys9, Phe57, Arg85, Thr91, Arg102, and Asn112. Catalysis depends on His115, which acts as the Pros-phosphohistidine intermediate.

Belongs to the NDK family. In terms of assembly, homotetramer. Mg(2+) serves as cofactor.

The protein localises to the cytoplasm. It catalyses the reaction a 2'-deoxyribonucleoside 5'-diphosphate + ATP = a 2'-deoxyribonucleoside 5'-triphosphate + ADP. The catalysed reaction is a ribonucleoside 5'-diphosphate + ATP = a ribonucleoside 5'-triphosphate + ADP. In terms of biological role, major role in the synthesis of nucleoside triphosphates other than ATP. The ATP gamma phosphate is transferred to the NDP beta phosphate via a ping-pong mechanism, using a phosphorylated active-site intermediate. This chain is Nucleoside diphosphate kinase, found in Parabacteroides distasonis (strain ATCC 8503 / DSM 20701 / CIP 104284 / JCM 5825 / NCTC 11152).